The sequence spans 26 residues: Thrombopoietin (26 aa).

The protein belongs to the EPO/TPO family.

The protein resides in the secreted. Its function is as follows. Lineage-specific cytokine affecting the proliferation and maturation of megakaryocytes from their committed progenitor cells. It acts at a late stage of megakaryocyte development. It may be the major physiological regulator of circulating platelets. The chain is Thrombopoietin (THPO) from Sus scrofa (Pig).